The chain runs to 162 residues: L-amino acid N-acetyltransferase AaaT (162 aa).

The 159-residue stretch at 4–162 folds into the N-acetyltransferase domain; that stretch reads IVIRHAETRD…VDAYYMARVK (159 aa).

This sequence belongs to the acetyltransferase family.

It carries out the reaction L-phenylalanine + acetyl-CoA = N-acetyl-L-phenylalanine + CoA + H(+). The enzyme catalyses L-methionine + acetyl-CoA = N-acetyl-L-methionine + CoA + H(+). In terms of biological role, catalyzes the N-acetylation of L-phenylalanine and L-methionine using acetyl-CoA as acetyl donor in vitro. Cannot accept L-tyrosine as substrate and propionyl-CoA, succinyl-CoA or (S)-methylmalonyl-CoA as acyl donors. Is also able to acetylate and thus detoxify several nonhydrolyzable aminoacyl adenylates, but not the processed form of the peptide-nucleotide antibiotic microcin C (McC). When overproduced, provides complete resistance to leucyl sulfamoyl adenylate (LSA) and partial resistance to alanyl sulfamoyl adenylate (ASA) and phenylalanyl sulfamoyl adenylate (FSA). Therefore, may protect bacteria from various toxic aminoacyl nucleotides, either exogenous or those generated inside the cell during normal metabolism. In Escherichia coli (strain K12), this protein is L-amino acid N-acetyltransferase AaaT.